A 97-amino-acid polypeptide reads, in one-letter code: Carboxypeptidase inhibitor (97 aa).

The signal sequence occupies residues 1–22 (MAATLPVFAVVFFAMVLASSQA).

It localises to the secreted. Functionally, potent competitive inhibitor of metallo-carboxypeptidases CPA1, CPA2, CPB, CPN, and TAF1a. Also inhibits human CPA4. Accelerates fibrinolysis in vitro and may contribute to the maintenance of host blood liquidity during feeding. This chain is Carboxypeptidase inhibitor, found in Rhipicephalus bursa (Tick).